A 356-amino-acid polypeptide reads, in one-letter code: 3-isopropylmalate dehydrogenase (356 aa).

Substrate contacts are provided by Arg-90, Arg-100, Arg-128, and Asp-222. Mg(2+)-binding residues include Asp-222, Asp-246, and Asp-250. Residue 280 to 292 participates in NAD(+) binding; the sequence is GSAPDIAGKGVAN.

Belongs to the isocitrate and isopropylmalate dehydrogenases family. LeuB type 1 subfamily. Homodimer. Mg(2+) is required as a cofactor. Requires Mn(2+) as cofactor.

It is found in the cytoplasm. It carries out the reaction (2R,3S)-3-isopropylmalate + NAD(+) = 4-methyl-2-oxopentanoate + CO2 + NADH. Its pathway is amino-acid biosynthesis; L-leucine biosynthesis; L-leucine from 3-methyl-2-oxobutanoate: step 3/4. In terms of biological role, catalyzes the oxidation of 3-carboxy-2-hydroxy-4-methylpentanoate (3-isopropylmalate) to 3-carboxy-4-methyl-2-oxopentanoate. The product decarboxylates to 4-methyl-2 oxopentanoate. This chain is 3-isopropylmalate dehydrogenase, found in Albidiferax ferrireducens (strain ATCC BAA-621 / DSM 15236 / T118) (Rhodoferax ferrireducens).